Consider the following 54-residue polypeptide: uncharacterized protein (54 aa).

This is an uncharacterized protein from Escherichia coli (strain K12).